A 493-amino-acid chain; its full sequence is Cytochrome P450 monooxygenase mfmF (493 aa).

Helical transmembrane passes span 3 to 23 (SLIP…RLFF) and 301 to 321 (VLFA…FHLV). C440 is a binding site for heme.

This sequence belongs to the cytochrome P450 family. Heme is required as a cofactor.

The protein resides in the membrane. It functions in the pathway secondary metabolite biosynthesis; terpenoid biosynthesis. Functionally, cytochrome P450 monooxygenase; part of the gene cluster that mediates the biosynthesis of the phthalide-terpenoid hybrid 11'-O-desmethylfendlerol. Within the pathway, mfmF catalyzes C-3 hydroxylation of 5-hydroxy-4-(hydroxymethyl)-7-methoxy-6-methylphthalide to yield cyclopolic acid. The biosynthesis of 11'-O-desmethylfendlerol begins with the NR-PKS mfmB that forms 3,5-dimethylorsellinic acid (DMOA), which is then transformed into the phthalide 5,7-dihydroxy-4-(hydroxymethyl)-6-methylphthalide by the cytochrome P450 monooxygenase mfmA and the hydrolase mfmC. Subsequently, the methyltransferase mfmE catalyzes 7-O-methylation to yield 5-hydroxy-4-(hydroxymethyl)-7-methoxy-6-methylphthalide, which undergoes C-3 hydroxylation by the cytochrome P450 monooxygenase mfmF. The resultant cyclopolic acid (2,5-dihydroxy-4-(hydroxymethyl)-7-methoxy-6-methylphthalide) is then farnesylated by the DMATS-type prenyltransferase mfmD to afford 5-O-farnesylcyclopolic acid. Finally, the Pyr4-family terpene cyclase mfmH cyclizes the farnesyl moiety of 5-O-farnesylcyclopolic acid into a drimane-like structure, thus completing the biosynthesis of 11'-O-desmethylfendlerol. This chain is Cytochrome P450 monooxygenase mfmF, found in Annulohypoxylon moriforme (Filamentous fungus).